A 418-amino-acid polypeptide reads, in one-letter code: tRNA-2-methylthio-N(6)-dimethylallyladenosine synthase (418 aa).

The 117-residue stretch at P2–L118 folds into the MTTase N-terminal domain. 6 residues coordinate [4Fe-4S] cluster: C11, C47, C81, C134, C138, and C141. Residues L120–K351 form the Radical SAM core domain. One can recognise a TRAM domain in the interval K346–N414.

The protein belongs to the methylthiotransferase family. MiaB subfamily. In terms of assembly, monomer. The cofactor is [4Fe-4S] cluster.

Its subcellular location is the cytoplasm. It carries out the reaction N(6)-dimethylallyladenosine(37) in tRNA + (sulfur carrier)-SH + AH2 + 2 S-adenosyl-L-methionine = 2-methylsulfanyl-N(6)-dimethylallyladenosine(37) in tRNA + (sulfur carrier)-H + 5'-deoxyadenosine + L-methionine + A + S-adenosyl-L-homocysteine + 2 H(+). Functionally, catalyzes the methylthiolation of N6-(dimethylallyl)adenosine (i(6)A), leading to the formation of 2-methylthio-N6-(dimethylallyl)adenosine (ms(2)i(6)A) at position 37 in tRNAs that read codons beginning with uridine. In Dehalococcoides mccartyi (strain CBDB1), this protein is tRNA-2-methylthio-N(6)-dimethylallyladenosine synthase.